Consider the following 101-residue polypeptide: Aspartyl/glutamyl-tRNA(Asn/Gln) amidotransferase subunit C (101 aa).

The protein belongs to the GatC family. In terms of assembly, heterotrimer of A, B and C subunits.

It catalyses the reaction L-glutamyl-tRNA(Gln) + L-glutamine + ATP + H2O = L-glutaminyl-tRNA(Gln) + L-glutamate + ADP + phosphate + H(+). The catalysed reaction is L-aspartyl-tRNA(Asn) + L-glutamine + ATP + H2O = L-asparaginyl-tRNA(Asn) + L-glutamate + ADP + phosphate + 2 H(+). In terms of biological role, allows the formation of correctly charged Asn-tRNA(Asn) or Gln-tRNA(Gln) through the transamidation of misacylated Asp-tRNA(Asn) or Glu-tRNA(Gln) in organisms which lack either or both of asparaginyl-tRNA or glutaminyl-tRNA synthetases. The reaction takes place in the presence of glutamine and ATP through an activated phospho-Asp-tRNA(Asn) or phospho-Glu-tRNA(Gln). This is Aspartyl/glutamyl-tRNA(Asn/Gln) amidotransferase subunit C from Lactobacillus delbrueckii subsp. bulgaricus (strain ATCC 11842 / DSM 20081 / BCRC 10696 / JCM 1002 / NBRC 13953 / NCIMB 11778 / NCTC 12712 / WDCM 00102 / Lb 14).